The following is a 417-amino-acid chain: Serine hydroxymethyltransferase (417 aa).

(6S)-5,6,7,8-tetrahydrofolate is bound by residues Leu-121 and Gly-125–Leu-127. Lys-229 bears the N6-(pyridoxal phosphate)lysine mark. Ser-355–Phe-357 lines the (6S)-5,6,7,8-tetrahydrofolate pocket.

This sequence belongs to the SHMT family. In terms of assembly, homodimer. Requires pyridoxal 5'-phosphate as cofactor.

It localises to the cytoplasm. It carries out the reaction (6R)-5,10-methylene-5,6,7,8-tetrahydrofolate + glycine + H2O = (6S)-5,6,7,8-tetrahydrofolate + L-serine. Its pathway is one-carbon metabolism; tetrahydrofolate interconversion. It functions in the pathway amino-acid biosynthesis; glycine biosynthesis; glycine from L-serine: step 1/1. Functionally, catalyzes the reversible interconversion of serine and glycine with tetrahydrofolate (THF) serving as the one-carbon carrier. This reaction serves as the major source of one-carbon groups required for the biosynthesis of purines, thymidylate, methionine, and other important biomolecules. Also exhibits THF-independent aldolase activity toward beta-hydroxyamino acids, producing glycine and aldehydes, via a retro-aldol mechanism. This chain is Serine hydroxymethyltransferase, found in Xylella fastidiosa (strain 9a5c).